A 372-amino-acid chain; its full sequence is Partitioning defective 6 homolog beta (372 aa).

Ser11 carries the post-translational modification Phosphoserine. The PB1 domain maps to 16-96; that stretch reads TMEVKSKFGA…PLLRIFIQKK (81 aa). Positions 126–253 are interaction with PARD3 and CDC42; it reads RKKPHIVISM…ITVRPANQRN (128 aa). The 18-residue stretch at 133–150 folds into the Pseudo-CRIB domain; the sequence is ISMPQDFRPVSSIIDVDI. One can recognise a PDZ domain in the interval 157–250; that stretch reads RVRLYKYGTE…NLIITVRPAN (94 aa). Over residues 253–272 the composition is skewed to polar residues; sequence NNVVRNSRTSGSSGQSTDNS. A disordered region spans residues 253–292; it reads NNVVRNSRTSGSSGQSTDNSLLGYPQQIEPSFEPEDEDSE.

It belongs to the PAR6 family. In terms of assembly, interacts with PARD3. Interacts with GTP-bound forms of CDC42 and RAC1. Interacts with GTP-bound RHOQ/TC10. Interacts with PALS1. Interacts with the N-terminal part of PRKCI and PRKCZ. Part of a complex with PARD3, CDC42 or RAC1 and PRKCI or PRKCZ. Part of a complex with LLGL1 and PRKCI. Interacts with PARD3B. Interacts with ECT2. In terms of tissue distribution, expressed in pancreas and in both adult and fetal kidney. Weakly expressed in placenta and lung. Not expressed in other tissues.

It is found in the cytoplasm. Its subcellular location is the cell membrane. The protein localises to the cell junction. It localises to the tight junction. In terms of biological role, adapter protein involved in asymmetrical cell division and cell polarization processes. Probably involved in formation of epithelial tight junctions. Association with PARD3 may prevent the interaction of PARD3 with F11R/JAM1, thereby preventing tight junction assembly. The PARD6-PARD3 complex links GTP-bound Rho small GTPases to atypical protein kinase C proteins. The protein is Partitioning defective 6 homolog beta (PARD6B) of Homo sapiens (Human).